We begin with the raw amino-acid sequence, 1472 residues long: ABC multidrug transporter atrI (1472 aa).

Residues Met1–Asp28 are disordered. One can recognise an ABC transporter 1 domain in the interval Phe134–Pro384. N-linked (GlcNAc...) asparagine glycosylation is found at Asn143, Asn277, Asn308, and Asn332. The next 7 membrane-spanning stretches (helical) occupy residues Ile506–Tyr526, Ala530–Leu550, Ile580–Leu600, Ser605–Phe625, Met639–Val659, Pro664–Ala684, and Phe744–Leu764. A compositionally biased stretch (basic and acidic residues) spans Ala784–Gly793. Positions Ala784–Ile821 are disordered. Residues Val804–Ile821 are compositionally biased toward polar residues. The region spanning Phe828–Gly1070 is the ABC transporter 2 domain. Gly864 to Thr871 provides a ligand contact to ATP. 6 consecutive transmembrane segments (helical) span residues Tyr1168 to Phe1188, Val1204 to Thr1224, Phe1244 to Phe1264, Leu1282 to Ile1302, Glu1309 to Met1329, and Gly1337 to Ala1357. A glycan (N-linked (GlcNAc...) asparagine) is linked at Asn1402. A helical transmembrane segment spans residues Phe1433 to Cys1453. Asn1460 carries an N-linked (GlcNAc...) asparagine glycan.

It belongs to the ABC transporter superfamily. ABCG family. PDR (TC 3.A.1.205) subfamily.

The protein localises to the cell membrane. It carries out the reaction itraconazole(in) + ATP + H2O = itraconazole(out) + ADP + phosphate + H(+). The enzyme catalyses voriconazole(in) + ATP + H2O = voriconazole(out) + ADP + phosphate + H(+). It catalyses the reaction fluconazole(in) + ATP + H2O = fluconazole(out) + ADP + phosphate + H(+). Pleiotropic ABC efflux transporter involved in the basal level of azole susceptibility. Confers resistance to fluconazole, itraconazole and voriconazole. The chain is ABC multidrug transporter atrI from Aspergillus fumigatus (strain ATCC MYA-4609 / CBS 101355 / FGSC A1100 / Af293) (Neosartorya fumigata).